Reading from the N-terminus, the 244-residue chain is NAD(P)H-quinone oxidoreductase subunit K (244 aa).

[4Fe-4S] cluster contacts are provided by cysteine 51, cysteine 52, cysteine 116, and cysteine 147.

Belongs to the complex I 20 kDa subunit family. As to quaternary structure, NDH-1 can be composed of about 15 different subunits; different subcomplexes with different compositions have been identified which probably have different functions. [4Fe-4S] cluster is required as a cofactor.

It localises to the cellular thylakoid membrane. It carries out the reaction a plastoquinone + NADH + (n+1) H(+)(in) = a plastoquinol + NAD(+) + n H(+)(out). The catalysed reaction is a plastoquinone + NADPH + (n+1) H(+)(in) = a plastoquinol + NADP(+) + n H(+)(out). Functionally, NDH-1 shuttles electrons from an unknown electron donor, via FMN and iron-sulfur (Fe-S) centers, to quinones in the respiratory and/or the photosynthetic chain. The immediate electron acceptor for the enzyme in this species is believed to be plastoquinone. Couples the redox reaction to proton translocation, and thus conserves the redox energy in a proton gradient. Cyanobacterial NDH-1 also plays a role in inorganic carbon-concentration. In Synechococcus sp. (strain JA-2-3B'a(2-13)) (Cyanobacteria bacterium Yellowstone B-Prime), this protein is NAD(P)H-quinone oxidoreductase subunit K.